Consider the following 351-residue polypeptide: Protein disulfide isomerase CRELD2 (351 aa).

Residues 1–21 form the signal peptide; sequence MRPPAPAVLGLLLLLLPTGEA. Residues 28-31 carry the CXXC motif; sequence CKRC. Cystine bridges form between Cys-28/Cys-31, Cys-137/Cys-151, Cys-145/Cys-163, and Cys-165/Cys-174. Residues 133-175 enclose the EGF-like 1 domain; the sequence is DCLACQGGSERPCSGNGHCVGDGTREGDGSCQCHLGYQGPLCS. The stretch at 190-237 is one FU 1 repeat; that stretch reads HSICSACDEACKTCVGPTNRDCGQCEVGWVRQDDACVDVDECAAEPPP. Residue Asn-248 is glycosylated (N-linked (GlcNAc...) asparagine). The FU 2 repeat unit spans residues 250-297; the sequence is SFVCEECDPTCMGCTGKGPTQCRECIAGYSKESGQCEDIDECSLAEKP. Residues 260–263 carry the CXXC motif; sequence CMGC. 4 cysteine pairs are disulfide-bonded: Cys-260–Cys-263, Cys-291–Cys-305, Cys-298–Cys-314, and Cys-316–Cys-327. Residues 287–328 enclose the EGF-like 2; calcium-binding domain; the sequence is DIDECSLAEKPCLRDNENCYNTPGSFVCVCPDGFEEAEDTCV. The disordered stretch occupies residues 329 to 351; the sequence is QTRPAGAEATEASPTQPPSREDL.

Belongs to the CRELD family. In terms of assembly, interacts with CHRNA4. Component of a complex containing at least CRELD2, MANF, MATN3 and PDIA4.

Its subcellular location is the endoplasmic reticulum. The enzyme catalyses Catalyzes the rearrangement of -S-S- bonds in proteins.. Functionally, protein disulfide isomerase. Might play a role in the unfolded protein response. May regulate transport of alpha4-beta2 neuronal acetylcholine receptor. The sequence is that of Protein disulfide isomerase CRELD2 (CRELD2) from Bos taurus (Bovine).